The sequence spans 384 residues: Dual-specificity RNA methyltransferase RlmN (384 aa).

The active-site Proton acceptor is glutamate 105. The region spanning 111–350 (EDDRATLCVS…TIVRKTRGDD (240 aa)) is the Radical SAM core domain. The cysteines at positions 118 and 355 are disulfide-linked. Cysteine 125, cysteine 129, and cysteine 132 together coordinate [4Fe-4S] cluster. S-adenosyl-L-methionine-binding positions include 179-180 (GE), serine 211, 233-235 (SLH), and asparagine 312. Cysteine 355 functions as the S-methylcysteine intermediate in the catalytic mechanism.

It belongs to the radical SAM superfamily. RlmN family. It depends on [4Fe-4S] cluster as a cofactor.

Its subcellular location is the cytoplasm. It carries out the reaction adenosine(2503) in 23S rRNA + 2 reduced [2Fe-2S]-[ferredoxin] + 2 S-adenosyl-L-methionine = 2-methyladenosine(2503) in 23S rRNA + 5'-deoxyadenosine + L-methionine + 2 oxidized [2Fe-2S]-[ferredoxin] + S-adenosyl-L-homocysteine. The catalysed reaction is adenosine(37) in tRNA + 2 reduced [2Fe-2S]-[ferredoxin] + 2 S-adenosyl-L-methionine = 2-methyladenosine(37) in tRNA + 5'-deoxyadenosine + L-methionine + 2 oxidized [2Fe-2S]-[ferredoxin] + S-adenosyl-L-homocysteine. In terms of biological role, specifically methylates position 2 of adenine 2503 in 23S rRNA and position 2 of adenine 37 in tRNAs. m2A2503 modification seems to play a crucial role in the proofreading step occurring at the peptidyl transferase center and thus would serve to optimize ribosomal fidelity. This is Dual-specificity RNA methyltransferase RlmN from Escherichia coli O17:K52:H18 (strain UMN026 / ExPEC).